The sequence spans 248 residues: Anamorsin homolog (248 aa).

The N-terminal SAM-like domain stretch occupies residues 4–129 (FKGLQKTLYI…ETGSSARLSF (126 aa)). Residues 130–161 (AKKDASALNVWKISGDDEELIDEEDLLDEEDK) form a linker region. Residues Cys-172, Cys-181, Cys-184, and Cys-186 each coordinate [2Fe-2S] cluster. Residues 172–186 (CSTTGKRKACKNCSC) form a fe-S binding site A region. [4Fe-4S] cluster is bound by residues Cys-209, Cys-212, Cys-220, and Cys-223. 2 short sequence motifs (cx2C motif) span residues 209–212 (CGNC) and 220–223 (CSTC). A fe-S binding site B region spans residues 209–223 (CGNCYLGDAFRCSTC).

Belongs to the anamorsin family. Monomer. It depends on [2Fe-2S] cluster as a cofactor. Requires [4Fe-4S] cluster as cofactor.

The protein resides in the cytoplasm. The protein localises to the mitochondrion intermembrane space. Functionally, component of the cytosolic iron-sulfur (Fe-S) protein assembly (CIA) machinery. Required for the maturation of extramitochondrial Fe-S proteins. Part of an electron transfer chain functioning in an early step of cytosolic Fe-S biogenesis, facilitating the de novo assembly of a [4Fe-4S] cluster on the cytosolic Fe-S scaffold complex. Electrons are transferred from NADPH via a FAD- and FMN-containing diflavin oxidoreductase. Together with the diflavin oxidoreductase, also required for the assembly of the diferric tyrosyl radical cofactor of ribonucleotide reductase (RNR), probably by providing electrons for reduction during radical cofactor maturation in the catalytic small subunit. The sequence is that of Anamorsin homolog from Drosophila ananassae (Fruit fly).